Reading from the N-terminus, the 203-residue chain is CASP-like protein 5A2 (203 aa).

The Cytoplasmic segment spans residues 1 to 63; the sequence is MRASRPVVHP…KDPPGAPGTP (63 aa). The tract at residues 39-58 is disordered; the sequence is AAHGGENAQPRGVRMKDPPG. A helical transmembrane segment spans residues 64–84; the sequence is GGLGLRLVQAFFAAAALAVMA. The Extracellular portion of the chain corresponds to 85–94; sequence STDDFPSVSA. A helical transmembrane segment spans residues 95–115; sequence FCYLVAAAILQCLWSLSLAVV. At 116–139 the chain is on the cytoplasmic side; the sequence is DIYALLVKRSLRNPQAVCIFTIGD. Residues 140 to 160 form a helical membrane-spanning segment; it reads GITGTLTLGAACASAGITVLI. The Extracellular segment spans residues 161-177; that stretch reads GNDLNICANNHCASFET. The chain crosses the membrane as a helical span at residues 178–198; sequence ATAMAFISWFALAPSCVLNFW. Over 199-203 the chain is Cytoplasmic; that stretch reads SMASR.

The protein belongs to the Casparian strip membrane proteins (CASP) family. As to quaternary structure, homodimer and heterodimers.

The protein resides in the cell membrane. The polypeptide is CASP-like protein 5A2 (Oryza sativa subsp. indica (Rice)).